The sequence spans 706 residues: Elongation factor G (706 aa).

The tr-type G domain maps to 8 to 297 (SYVRNIGIGA…AVVDYLPSPN (290 aa)). GTP-binding positions include 17-24 (AHIDAGKT), 95-99 (DTPGH), and 149-152 (NKMD).

The protein belongs to the TRAFAC class translation factor GTPase superfamily. Classic translation factor GTPase family. EF-G/EF-2 subfamily.

Its subcellular location is the cytoplasm. Functionally, catalyzes the GTP-dependent ribosomal translocation step during translation elongation. During this step, the ribosome changes from the pre-translocational (PRE) to the post-translocational (POST) state as the newly formed A-site-bound peptidyl-tRNA and P-site-bound deacylated tRNA move to the P and E sites, respectively. Catalyzes the coordinated movement of the two tRNA molecules, the mRNA and conformational changes in the ribosome. The sequence is that of Elongation factor G from Orientia tsutsugamushi (strain Boryong) (Rickettsia tsutsugamushi).